The following is a 231-amino-acid chain: Large ribosomal subunit protein uL1 (231 aa).

The protein belongs to the universal ribosomal protein uL1 family. Part of the 50S ribosomal subunit.

Functionally, binds directly to 23S rRNA. The L1 stalk is quite mobile in the ribosome, and is involved in E site tRNA release. In terms of biological role, protein L1 is also a translational repressor protein, it controls the translation of the L11 operon by binding to its mRNA. The chain is Large ribosomal subunit protein uL1 from Pseudomonas fluorescens (strain ATCC BAA-477 / NRRL B-23932 / Pf-5).